A 305-amino-acid chain; its full sequence is NADH-cytochrome b5 reductase 1 (305 aa).

The chain crosses the membrane as a helical span at residues 8–28; that stretch reads VLLASLGVGLLTLLGVALGAY. The region spanning 44–156 is the FAD-binding FR-type domain; the sequence is NEKYQLRLLD…RGPSGLLTYA (113 aa). FAD-binding positions include 136–166 and 175–210; these read DSLK…IQPN and VARN…QCFL.

This sequence belongs to the flavoprotein pyridine nucleotide cytochrome reductase family. It depends on FAD as a cofactor.

The protein localises to the membrane. The enzyme catalyses 2 Fe(III)-[cytochrome b5] + NADH = 2 Fe(II)-[cytochrome b5] + NAD(+) + H(+). Functionally, NADH-cytochrome b5 reductases are involved in desaturation and elongation of fatty acids, cholesterol biosynthesis, drug metabolism, and, in erythrocyte, methemoglobin reduction. This is NADH-cytochrome b5 reductase 1 (CYB5R1) from Bos taurus (Bovine).